A 774-amino-acid polypeptide reads, in one-letter code: MGPIPSTRRLTGTPHSFISRRAPPECMWYVCMFANLEITFYDSGVPVYEMVCRDVAVMRRRSDAYLNATQILKVAGFDKPQRTRVLEREVQKGEHEKVQGGYGKYQGTWIPIERGLALAKQYGVEDILRPIIDYVPTSVSPPPAPKHSVAPPSKARRDKEKETGRTKATPSRTGPTSAAALQAQAQLNRAKMHDSTPDADASFRSFEERVSLTPEDDSSSDTPSPVASVMTDQDMEVDKMGMHMNMPNVTLSQNMEELGAGSRKRSAAMMMEDEDQFGHLRSVRGNSAVHTPHGTPRHLGIGMPPEPIGPEQYTDIILNYFVSETSQIPSILVSPPHDFDPNAPIDDDGHTALHWACAMGRVRVVKLLLTAGASIFAGNNAEQTPLMRSVMFSNNYDMRKFPELYELLHRSTLNIDKQNRTVFHHIANLALTKGKTHAAKYYMETILARLADYPQELADVINFQDEEGETALTIAARARSRRLVKALLDHGANPKIKNRDSRSAEDYILEDERFRSSPVPAPNGGVGKVSTSAAAEKPIFAPQLYFSEAARLCGGQALTDITSHMQSLARSFDAELQGKERDILQAKALLTNIHTEVTENGRSITAITNQAAPLEEKRHELESLQASLKTKVKDALKKGYIGWLEGELIREQRWEKGELEGNEEEKAAVQALRDVPTGGQEVVQAEEEKLRWEIEEKRKRRAMFVEKFVRAQAEAGTSEQIAKYRKLVSAGLGGVSTNEVDELMNQLLEGLEEENDNQVYNTSAGESGPSSWVQ.

An HTH APSES-type domain is found at 37 to 143 (EITFYDSGVP…YVPTSVSPPP (107 aa)). Residues 68 to 89 (ATQILKVAGFDKPQRTRVLERE) constitute a DNA-binding region (H-T-H motif). Disordered stretches follow at residues 135–180 (VPTS…SAAA) and 209–229 (RVSL…VASV). Residues 155–165 (ARRDKEKETGR) show a composition bias toward basic and acidic residues. Positions 166–176 (TKATPSRTGPT) are enriched in polar residues. ANK repeat units follow at residues 348-377 (DGHT…SIFA) and 467-496 (EGET…NPKI). The tract at residues 752–774 (EEENDNQVYNTSAGESGPSSWVQ) is disordered. The span at 757 to 774 (NQVYNTSAGESGPSSWVQ) shows a compositional bias: polar residues.

The protein resides in the nucleus. In terms of biological role, transcription factor that positively regulates ergosterol biosynthesis and thereby affects polyene and azole drug susceptibility. Plays a role in maintenance of membrane stability and osmotic stress response. Involved in genotoxic and oxidative stress responses. Also promotes production of melanin and capsule and thereby is required for full virulence. This is Transcription factor MBS1 from Cryptococcus neoformans var. grubii serotype A (strain H99 / ATCC 208821 / CBS 10515 / FGSC 9487) (Filobasidiella neoformans var. grubii).